A 370-amino-acid chain; its full sequence is Putative agmatine deiminase (370 aa).

The Amidino-cysteine intermediate role is filled by C361.

This sequence belongs to the agmatine deiminase family.

It catalyses the reaction agmatine + H2O = N-carbamoylputrescine + NH4(+). This is Putative agmatine deiminase from Shewanella baltica (strain OS223).